Here is a 379-residue protein sequence, read N- to C-terminus: UDP-4-amino-4-deoxy-L-arabinose--oxoglutarate aminotransferase (379 aa).

At K182 the chain carries N6-(pyridoxal phosphate)lysine.

This sequence belongs to the DegT/DnrJ/EryC1 family. ArnB subfamily. As to quaternary structure, homodimer. Pyridoxal 5'-phosphate is required as a cofactor.

The catalysed reaction is UDP-4-amino-4-deoxy-beta-L-arabinose + 2-oxoglutarate = UDP-beta-L-threo-pentopyranos-4-ulose + L-glutamate. It participates in nucleotide-sugar biosynthesis; UDP-4-deoxy-4-formamido-beta-L-arabinose biosynthesis; UDP-4-deoxy-4-formamido-beta-L-arabinose from UDP-alpha-D-glucuronate: step 2/3. It functions in the pathway bacterial outer membrane biogenesis; lipopolysaccharide biosynthesis. Functionally, catalyzes the conversion of UDP-4-keto-arabinose (UDP-Ara4O) to UDP-4-amino-4-deoxy-L-arabinose (UDP-L-Ara4N). The modified arabinose is attached to lipid A and is required for resistance to polymyxin and cationic antimicrobial peptides. This Escherichia coli O7:K1 (strain IAI39 / ExPEC) protein is UDP-4-amino-4-deoxy-L-arabinose--oxoglutarate aminotransferase.